Reading from the N-terminus, the 275-residue chain is Translation initiation factor 2 subunit alpha (275 aa).

The region spanning 12-83 is the S1 motif domain; the sequence is GEFVVATVKR…RKGHIDLSLR (72 aa).

Belongs to the eIF-2-alpha family. Heterotrimer composed of an alpha, a beta and a gamma chain.

Functionally, eIF-2 functions in the early steps of protein synthesis by forming a ternary complex with GTP and initiator tRNA. The polypeptide is Translation initiation factor 2 subunit alpha (eif2a) (Pyrococcus abyssi (strain GE5 / Orsay)).